Here is a 550-residue protein sequence, read N- to C-terminus: ATP synthase subunit alpha (550 aa).

172–179 (GDRKTGKT) provides a ligand contact to ATP. The segment at 521–550 (EPAAEPLAGEEDRETVTRFHDDATDRPAGS) is disordered. The segment covering 534–550 (ETVTRFHDDATDRPAGS) has biased composition (basic and acidic residues).

The protein belongs to the ATPase alpha/beta chains family. In terms of assembly, F-type ATPases have 2 components, CF(1) - the catalytic core - and CF(0) - the membrane proton channel. CF(1) has five subunits: alpha(3), beta(3), gamma(1), delta(1), epsilon(1). CF(0) has three main subunits: a(1), b(2) and c(9-12). The alpha and beta chains form an alternating ring which encloses part of the gamma chain. CF(1) is attached to CF(0) by a central stalk formed by the gamma and epsilon chains, while a peripheral stalk is formed by the delta and b chains.

Its subcellular location is the cell membrane. It catalyses the reaction ATP + H2O + 4 H(+)(in) = ADP + phosphate + 5 H(+)(out). Its function is as follows. Produces ATP from ADP in the presence of a proton gradient across the membrane. The alpha chain is a regulatory subunit. In Salinispora tropica (strain ATCC BAA-916 / DSM 44818 / JCM 13857 / NBRC 105044 / CNB-440), this protein is ATP synthase subunit alpha.